Here is a 274-residue protein sequence, read N- to C-terminus: Basic leucine zipper transcriptional factor ATF-like 2 (274 aa).

Disordered stretches follow at residues 1–47, 128–151, and 187–229; these read MHLC…ALHQ, GSCYPAQPLSPGPQPHDSPSLLQC, and GSSS…PSSA. The bZIP domain occupies 17–80; it reads EQQRQLKKQK…AWWSRTLHVH (64 aa). The tract at residues 20-41 is basic motif; that stretch reads RQLKKQKNRAAAQRSRQKHTDK. The span at 37 to 47 shows a compositional bias: basic and acidic residues; it reads KHTDKADALHQ. The interval 45-66 is leucine-zipper; sequence LHQQHESLEKDNLALRKEIQSL. Residues 187–196 show a composition bias toward low complexity; that stretch reads GSSSKLSALQ.

The protein belongs to the bZIP family. As to quaternary structure, heterodimer; heterodimerizes with JUN family proteins.

The protein resides in the nucleus. AP-1 family transcription factor that controls the differentiation of lineage-specific cells in the immune system. Following infection, participates in the differentiation of CD8(+) thymic conventional dendritic cells in the immune system. Acts via the formation of a heterodimer with JUN family proteins that recognizes and binds DNA sequence 5'-TGA[CG]TCA-3' and regulates expression of target genes. Selectively suppresses CCN1 transcription and hence blocks the downstream cell proliferation signals produced by CCN1 and inhibits CCN1-induced anchorage-independent growth and invasion in several cancer types, such as breast cancer, malignant glioma and metastatic melanoma. Possibly acts by interfering with AP-1 binding to CCN1 promoter. In Homo sapiens (Human), this protein is Basic leucine zipper transcriptional factor ATF-like 2 (BATF2).